Consider the following 382-residue polypeptide: Dual-specificity RNA methyltransferase RlmN (382 aa).

Glu96 (proton acceptor) is an active-site residue. The region spanning 102-342 (QGKRGTLCVS…VRTTRGEDID (241 aa)) is the Radical SAM core domain. The cysteines at positions 109 and 345 are disulfide-linked. The [4Fe-4S] cluster site is built by Cys116, Cys120, and Cys123. S-adenosyl-L-methionine contacts are provided by residues 170 to 171 (GE), Ser202, 224 to 226 (SLH), and Asn302. The active-site S-methylcysteine intermediate is the Cys345.

The protein belongs to the radical SAM superfamily. RlmN family. The cofactor is [4Fe-4S] cluster.

It localises to the cytoplasm. The catalysed reaction is adenosine(2503) in 23S rRNA + 2 reduced [2Fe-2S]-[ferredoxin] + 2 S-adenosyl-L-methionine = 2-methyladenosine(2503) in 23S rRNA + 5'-deoxyadenosine + L-methionine + 2 oxidized [2Fe-2S]-[ferredoxin] + S-adenosyl-L-homocysteine. It catalyses the reaction adenosine(37) in tRNA + 2 reduced [2Fe-2S]-[ferredoxin] + 2 S-adenosyl-L-methionine = 2-methyladenosine(37) in tRNA + 5'-deoxyadenosine + L-methionine + 2 oxidized [2Fe-2S]-[ferredoxin] + S-adenosyl-L-homocysteine. Specifically methylates position 2 of adenine 2503 in 23S rRNA and position 2 of adenine 37 in tRNAs. m2A2503 modification seems to play a crucial role in the proofreading step occurring at the peptidyl transferase center and thus would serve to optimize ribosomal fidelity. This Pseudomonas savastanoi pv. phaseolicola (strain 1448A / Race 6) (Pseudomonas syringae pv. phaseolicola (strain 1448A / Race 6)) protein is Dual-specificity RNA methyltransferase RlmN.